Consider the following 258-residue polypeptide: MGLGEASARGTSMEGDCLSCIKYLMFVFNFLIFLGGSFLLGVGVWVVVDPTGFREIVAANPLLFTGVYIILAMGGMLFLLGFLGCCGAIRENKCLLLFFFMLILIIFLAELAAAILAFIFREHLTREYFTKELKKHYQGYNNTDVFTSTWNAIMNTFDCCGVNSPEDFEESIFRIINPSEMVPEACCRRNNHVGESGFSNREECLSGSMLYRNNKGCYSAVVDYFEMYIYVAGALAIVVLTIELFAMVFAMCLFRGIQ.

The Cytoplasmic segment spans residues Met1–Met25. The helical transmembrane segment at Phe26–Val46 threads the bilayer. The Extracellular portion of the chain corresponds to Val47–Pro61. Residues Leu62–Phe82 traverse the membrane as a helical segment. Topologically, residues Leu83–Cys94 are cytoplasmic. A helical membrane pass occupies residues Leu95–Ile115. Residues Leu116–Tyr228 lie on the Extracellular side of the membrane. The N-linked (GlcNAc...) asparagine glycan is linked to Asn141. Residues Ile229–Phe249 traverse the membrane as a helical segment. At Ala250 to Gln258 the chain is on the cytoplasmic side.

This sequence belongs to the tetraspanin (TM4SF) family.

It is found in the membrane. In terms of biological role, may regulate angiogenesis through KDR/VEGFR2 and NOTCH1 pathways. This is Tetraspanin-18B (tspan18b) from Danio rerio (Zebrafish).